A 382-amino-acid chain; its full sequence is Zinc metalloproteinase nas-7 (382 aa).

The signal sequence occupies residues 1 to 18 (MLLPWIITIVTVIPATLG). Positions 19–79 (HRNRVQDDEM…DIRLPRRHKR (61 aa)) are excised as a propeptide. In terms of domain architecture, Peptidase M12A spans 80–273 (NGVSRAAKLW…SKINRMYNCP (194 aa)). 5 disulfide bridges follow: C122–C272, C144–C163, C348–C382, C355–C375, and C362–C379. H171 is a Zn(2+) binding site. E172 is an active-site residue. The Zn(2+) site is built by H175 and H181. In terms of domain architecture, ShKT spans 348–382 (CEDRITVCWWTADRCRSPAIYQVMSSLCPKTCKFC).

Zn(2+) is required as a cofactor. In terms of tissue distribution, expressed in the head of adult hermaphrodites but not within pharynx cells. Expressed in pharyngeal muscles, mc cells, intestine, hypodermal seam cells, arcade cells, spermatheca, vulva and rectal epithelial cells.

The protein resides in the secreted. Metalloprotease. This Caenorhabditis elegans protein is Zinc metalloproteinase nas-7 (nas-7).